The sequence spans 241 residues: ATP synthase subunit a (241 aa).

5 helical membrane-spanning segments follow: residues 30–50, 91–111, 128–148, 193–213, and 214–234; these read GQVF…ISLG, FIGT…LIPW, INTT…AGLS, LVVG…VMFL, and GLFT…YYIG.

Belongs to the ATPase A chain family. F-type ATPases have 2 components, CF(1) - the catalytic core - and CF(0) - the membrane proton channel. CF(1) has five subunits: alpha(3), beta(3), gamma(1), delta(1), epsilon(1). CF(0) has four main subunits: a, b, b' and c.

The protein localises to the cellular thylakoid membrane. Key component of the proton channel; it plays a direct role in the translocation of protons across the membrane. This Prochlorococcus marinus (strain MIT 9301) protein is ATP synthase subunit a.